The primary structure comprises 432 residues: GTPase HflX (432 aa).

Residues 202 to 367 form the Hflx-type G domain; sequence FTVALVGYTN…ELRRAVGRAM (166 aa). Residues 208 to 215, 233 to 237, 255 to 258, 321 to 324, and 345 to 347 each bind GTP; these read GYTNAGKS, FATLD, DTVG, NKID, and SAQ. Residues Ser-215 and Thr-235 each coordinate Mg(2+).

The protein belongs to the TRAFAC class OBG-HflX-like GTPase superfamily. HflX GTPase family. Monomer. Associates with the 50S ribosomal subunit. Mg(2+) serves as cofactor.

It is found in the cytoplasm. Its function is as follows. GTPase that associates with the 50S ribosomal subunit and may have a role during protein synthesis or ribosome biogenesis. This is GTPase HflX from Magnetococcus marinus (strain ATCC BAA-1437 / JCM 17883 / MC-1).